The primary structure comprises 593 residues: Probable ubiquitin carboxyl-terminal hydrolase 4 (593 aa).

Residues 227–573 enclose the USP domain; that stretch reads IGLTNLGNTC…SSYILFYKRS (347 aa). Residue Cys-236 is the Nucleophile of the active site. A phosphoserine mark is found at Ser-338 and Ser-343. His-530 acts as the Proton acceptor in catalysis.

The protein belongs to the peptidase C19 family. Interacts with sfp47.

Its subcellular location is the cytoplasm. It is found in the endosome. The enzyme catalyses Thiol-dependent hydrolysis of ester, thioester, amide, peptide and isopeptide bonds formed by the C-terminal Gly of ubiquitin (a 76-residue protein attached to proteins as an intracellular targeting signal).. Has an ATP-independent isopeptidase activity, cleaving at the C-terminus of the ubiquitin moiety. Acts late in the proteolytic pathway in conjunction with the 26S proteasome. Plays a role in avoiding DNA overreplication. The sequence is that of Probable ubiquitin carboxyl-terminal hydrolase 4 (ubp4) from Schizosaccharomyces pombe (strain 972 / ATCC 24843) (Fission yeast).